The following is a 295-amino-acid chain: Probable endonuclease 4 (295 aa).

Positions 78, 118, 154, 188, 191, 225, 238, 240, and 270 each coordinate Zn(2+).

It belongs to the AP endonuclease 2 family. The cofactor is Zn(2+).

It catalyses the reaction Endonucleolytic cleavage to 5'-phosphooligonucleotide end-products.. Endonuclease IV plays a role in DNA repair. It cleaves phosphodiester bonds at apurinic or apyrimidinic (AP) sites, generating a 3'-hydroxyl group and a 5'-terminal sugar phosphate. This is Probable endonuclease 4 from Vibrio campbellii (strain ATCC BAA-1116).